Here is a 427-residue protein sequence, read N- to C-terminus: MGAGATGRAMDGPRLLLLLLLGVSLGGAKEACPTGLYTHSGECCKACNLGEGVAQPCGANQTVCEPCLDSVTFSDVVSATEPCKPCTECVGLQSMSAPCVEADDAVCRCAYGYYQDETTGRCEACRVCEAGSGLVFSCQDKQNTVCEECPDGTYSDEANHVDPCLPCTVCEDTERQLRECTRWADAECEEIPGRWITRSTPPEGSDSTAPSTQEPEAPPEQDLIASTVAGVVTTVMGSSQPVVTRGTTDNLIPVYCSILAAVVVGLVAYIAFKRWNSCKQNKQGANSRPVNQTPPPEGEKLHSDSGISVDSQSLHDQQPHTQTASGQALKGDGGLYSSLPPAKREEVEKLLNGSAGDTWRHLAGELGYQPEHIDSFTHEACPVRALLASWATQDSATLDALLAALRRIQRADLVESLCSESTATSPV.

An N-terminal signal peptide occupies residues 1-28 (MGAGATGRAMDGPRLLLLLLLGVSLGGA). The Extracellular portion of the chain corresponds to 29–250 (KEACPTGLYT…PVVTRGTTDN (222 aa)). TNFR-Cys repeat units follow at residues 31–64 (ACPTGLYTHSGECCKACNLGEGVAQPCGANQTVC), 66–107 (PCLD…DAVC), 108–146 (RCAYGYYQDETTGRCEACRVCEAGSGLVFSCQDKQNTVC), and 148–188 (ECPD…DAEC). Disulfide bonds link C32-C43, C44-C57, C47-C64, C67-C83, C86-C99, C89-C107, C109-C122, C125-C138, C128-C146, C149-C164, C167-C180, and C170-C188. N60 carries N-linked (GlcNAc...) asparagine glycosylation. The interval 194 to 219 (RWITRSTPPEGSDSTAPSTQEPEAPP) is disordered. The segment covering 197–214 (TRSTPPEGSDSTAPSTQE) has biased composition (polar residues). The chain crosses the membrane as a helical span at residues 251-272 (LIPVYCSILAAVVVGLVAYIAF). The Cytoplasmic portion of the chain corresponds to 273–427 (KRWNSCKQNK…CSESTATSPV (155 aa)). Composition is skewed to polar residues over residues 281–291 (NKQGANSRPVN) and 305–326 (SGISVDSQSLHDQQPHTQTASG). Positions 281 to 338 (NKQGANSRPVNQTPPPEGEKLHSDSGISVDSQSLHDQQPHTQTASGQALKGDGGLYSS) are disordered. S311 is subject to Phosphoserine. A mediates interaction with KIDINS220 region spans residues 326-341 (GQALKGDGGLYSSLPP). The region spanning 344-421 (REEVEKLLNG…DLVESLCSES (78 aa)) is the Death domain.

In terms of assembly, homodimer; disulfide-linked. Heterodimer with SORCS2. The extracellular domains of the heterodimer bind NGF. The cytoplasmic region of the heterodimer binds TRIO. NGF binding mediates dissociation of TRIO from the receptor complex. Interacts with RTN4R. Interacts with TRAF2, TRAF4, TRAF6, PTPN13 and RANBP9. Interacts through TRAF6 with SQSTM1 which bridges NGFR to NTRK1. Interacts with BEX1. Interacts with BEX3. Interacts with KIDINS220 and NTRK1. Can form a ternary complex with NTRK1 and KIDINS220 and this complex is affected by the expression levels of KIDINS220. An increase in KIDINS220 expression leads to a decreased association of NGFR and NTRK1. Interacts with NTRK2; may regulate the ligand specificity of the NTRK2 receptor. Interacts (via death domain) with RAB31. Interacts with LINGO1. Interacts with NRADD. Interacts with MAGED1; the interaction antagonizes the association NGFR:NTRK1. Interacts (via death domain) with ARHGDIA and RIPK2. Interacts with BFAR. N- and O-glycosylated. Post-translationally, O-linked glycans consist of Gal(1-3)GalNAc core elongated by 1 or 2 NeuNAc. In terms of processing, phosphorylated on serine residues.

It localises to the cell membrane. The protein localises to the cytoplasm. It is found in the perikaryon. Its subcellular location is the cell projection. The protein resides in the growth cone. It localises to the dendritic spine. Low affinity receptor which can bind to NGF, BDNF, NTF3, and NTF4. Forms a heterodimeric receptor with SORCS2 that binds the precursor forms of NGF, BDNF and NTF3 with high affinity, and has much lower affinity for mature NGF and BDNF. Plays an important role in differentiation and survival of specific neuronal populations during development. Can mediate cell survival as well as cell death of neural cells. Plays a role in the inactivation of RHOA. Plays a role in the regulation of the translocation of GLUT4 to the cell surface in adipocytes and skeletal muscle cells in response to insulin, probably by regulating RAB31 activity, and thereby contributes to the regulation of insulin-dependent glucose uptake. Necessary for the circadian oscillation of the clock genes BMAL1, PER1, PER2 and NR1D1 in the suprachiasmatic nucleus (SCmgetaN) of the brain and in liver and of the genes involved in glucose and lipid metabolism in the liver. Together with BFAR negatively regulates NF-kappa-B and JNK-related signaling pathways. The sequence is that of Tumor necrosis factor receptor superfamily member 16 (NGFR) from Homo sapiens (Human).